Here is a 130-residue protein sequence, read N- to C-terminus: UPF0146 protein AF_0739.1 (130 aa).

The protein belongs to the UPF0146 family.

The protein is UPF0146 protein AF_0739.1 of Archaeoglobus fulgidus (strain ATCC 49558 / DSM 4304 / JCM 9628 / NBRC 100126 / VC-16).